Here is a 331-residue protein sequence, read N- to C-terminus: MASALWTVLPSRMSLRSLKWSLLLLSLLSFFVMWYLSLPHYNVIERVNWMYFYEYEPIYRQDFHFTLREHSNCSHQNPFLVILVTSHPSDVKARQAIRVTWGEKKSWWGYEVLTFFLLGQEAEKEDKMLALSLEDEHLLYGDIIRQDFLDTYNNLTLKTIMAFRWVTEFCPNAKYVMKTDTDVFINTGNLVKYLLNLNHSEKFFTGYPLIDNYSYRGFYQKTHISYQEYPFKVFPPYCSGLGYIMSRDLVPRIYEMMGHVKPIKFEDVYVGICLNLLKVNIHIPEDTNLFFLYRIHLDVCQLRRVIAAHGFSSKEIITFWQVMLRNTTCHY.

Topologically, residues 1–20 (MASALWTVLPSRMSLRSLKW) are cytoplasmic. A helical; Signal-anchor for type II membrane protein transmembrane segment spans residues 21-43 (SLLLLSLLSFFVMWYLSLPHYNV). Over 44 to 331 (IERVNWMYFY…VMLRNTTCHY (288 aa)) the chain is Lumenal. N-linked (GlcNAc...) asparagine glycans are attached at residues N72, N154, N198, N212, and N326.

It belongs to the glycosyltransferase 31 family. Mg(2+) serves as cofactor. As to expression, higher expression in heart and brain, and to a lesser extent in lung, placenta, kidney and testis. Lower expression in liver, spleen and stomach. No expression in skeletal muscle.

It localises to the golgi apparatus membrane. The catalysed reaction is a globoside Gb3Cer (d18:1(4E)) + UDP-N-acetyl-alpha-D-galactosamine = a globoside Gb4Cer (d18:1(4E)) + UDP + H(+). It participates in protein modification; protein glycosylation. Transfers N-acetylgalactosamine onto globotriaosylceramide. Plays a critical role in preimplantation stage embryonic development. The chain is UDP-GalNAc:beta-1,3-N-acetylgalactosaminyltransferase 1 from Homo sapiens (Human).